The following is a 329-amino-acid chain: Uroporphyrinogen decarboxylase (329 aa).

Residues 22–26, Asp-71, Tyr-140, Ser-195, and His-307 each bind substrate; that span reads RQVGR.

It belongs to the uroporphyrinogen decarboxylase family. As to quaternary structure, homodimer.

The protein resides in the cytoplasm. The enzyme catalyses uroporphyrinogen III + 4 H(+) = coproporphyrinogen III + 4 CO2. Its pathway is porphyrin-containing compound metabolism; protoporphyrin-IX biosynthesis; coproporphyrinogen-III from 5-aminolevulinate: step 4/4. Its function is as follows. Catalyzes the decarboxylation of four acetate groups of uroporphyrinogen-III to yield coproporphyrinogen-III. The protein is Uroporphyrinogen decarboxylase of Chlamydia pneumoniae (Chlamydophila pneumoniae).